Here is a 561-residue protein sequence, read N- to C-terminus: Type II methyltransferase M.BstVI (561 aa).

It belongs to the N(4)/N(6)-methyltransferase family.

The catalysed reaction is a 2'-deoxyadenosine in DNA + S-adenosyl-L-methionine = an N(6)-methyl-2'-deoxyadenosine in DNA + S-adenosyl-L-homocysteine + H(+). In terms of biological role, a gamma subtype methylase, recognizes the double-stranded sequence 5'-CTCGAG-3', methylates A-5 on both strands, and protects the DNA from cleavage by the BstVI endonuclease. The polypeptide is Type II methyltransferase M.BstVI (Geobacillus stearothermophilus (Bacillus stearothermophilus)).